A 134-amino-acid polypeptide reads, in one-letter code: Small ribosomal subunit protein bS6 (134 aa).

The tract at residues 100-134 is disordered; the sequence is SFLARDETDRRERSEETAEGEGEPDHSANEAVVTA. Basic and acidic residues predominate over residues 103–115; it reads ARDETDRRERSEE.

It belongs to the bacterial ribosomal protein bS6 family.

Its function is as follows. Binds together with bS18 to 16S ribosomal RNA. This is Small ribosomal subunit protein bS6 from Acidithiobacillus ferrooxidans (strain ATCC 23270 / DSM 14882 / CIP 104768 / NCIMB 8455) (Ferrobacillus ferrooxidans (strain ATCC 23270)).